We begin with the raw amino-acid sequence, 337 residues long: Putative F-box protein At4g09870 (337 aa).

One can recognise an F-box domain in the interval 1–46 (MSISELSQDLLEEILCRVPAISLKKLRSTCKLWNSLFIDKRVRNEL).

This Arabidopsis thaliana (Mouse-ear cress) protein is Putative F-box protein At4g09870.